The following is a 511-amino-acid chain: Ribose import ATP-binding protein RbsA (511 aa).

2 ABC transporter domains span residues 13-249 (VSMD…VGRA) and 260-503 (ALGE…AGIA). ATP is bound at residue 45–52 (GENGAGKS).

Belongs to the ABC transporter superfamily. Ribose importer (TC 3.A.1.2.1) family. The complex is composed of an ATP-binding protein (RbsA), two transmembrane proteins (RbsC) and a solute-binding protein (RbsB).

The protein localises to the cell inner membrane. The enzyme catalyses D-ribose(out) + ATP + H2O = D-ribose(in) + ADP + phosphate + H(+). In terms of biological role, part of the ABC transporter complex RbsABC involved in ribose import. Responsible for energy coupling to the transport system. The chain is Ribose import ATP-binding protein RbsA from Roseobacter denitrificans (strain ATCC 33942 / OCh 114) (Erythrobacter sp. (strain OCh 114)).